The following is a 396-amino-acid chain: Elongation factor Tu (396 aa).

The tr-type G domain maps to 10–206 (KPHCNIGTIG…TVDAYIPQPE (197 aa)). The segment at 19–26 (GHVDHGKT) is G1. Residue 19–26 (GHVDHGKT) coordinates GTP. Residue Thr-26 coordinates Mg(2+). The tract at residues 60 to 64 (GITIS) is G2. The interval 81-84 (DCPG) is G3. GTP contacts are provided by residues 81–85 (DCPGH) and 136–139 (NKVD). The G4 stretch occupies residues 136–139 (NKVD). The G5 stretch occupies residues 174–176 (SAL).

It belongs to the TRAFAC class translation factor GTPase superfamily. Classic translation factor GTPase family. EF-Tu/EF-1A subfamily. Monomer.

It localises to the cytoplasm. The enzyme catalyses GTP + H2O = GDP + phosphate + H(+). In terms of biological role, GTP hydrolase that promotes the GTP-dependent binding of aminoacyl-tRNA to the A-site of ribosomes during protein biosynthesis. The chain is Elongation factor Tu from Methylocella silvestris (strain DSM 15510 / CIP 108128 / LMG 27833 / NCIMB 13906 / BL2).